We begin with the raw amino-acid sequence, 481 residues long: Proline--tRNA ligase (481 aa).

It belongs to the class-II aminoacyl-tRNA synthetase family. ProS type 3 subfamily. Homodimer.

Its subcellular location is the cytoplasm. The enzyme catalyses tRNA(Pro) + L-proline + ATP = L-prolyl-tRNA(Pro) + AMP + diphosphate. In terms of biological role, catalyzes the attachment of proline to tRNA(Pro) in a two-step reaction: proline is first activated by ATP to form Pro-AMP and then transferred to the acceptor end of tRNA(Pro). This is Proline--tRNA ligase from Chlorobium phaeovibrioides (strain DSM 265 / 1930) (Prosthecochloris vibrioformis (strain DSM 265)).